The following is a 239-amino-acid chain: Sugar fermentation stimulation protein homolog (239 aa).

This sequence belongs to the SfsA family.

This is Sugar fermentation stimulation protein homolog from Maridesulfovibrio salexigens (strain ATCC 14822 / DSM 2638 / NCIMB 8403 / VKM B-1763) (Desulfovibrio salexigens).